The chain runs to 257 residues: Membrane protein insertase YidC 1 (257 aa).

Positions 1–20 (MYRKFGMAAMLVSILLLMTG) are cleaved as a signal peptide. C21 carries the N-palmitoyl cysteine lipid modification. Residue C21 is the site of S-diacylglycerol cysteine attachment. 5 helical membrane passes run 35 to 55 (IWDSYFVYPLSWLMIYFANAF), 59 to 79 (FGLAIIVVTLLIRLLILPLMI), 129 to 149 (LAGCFPVLIQMPILLAFYHAI), 160 to 180 (FLWFVLNQPDPILLPIIAGIT), and 205 to 225 (VMILVFAMFLPSSLALYWVIG).

Belongs to the OXA1/ALB3/YidC family. Type 2 subfamily.

The protein resides in the cell membrane. Its function is as follows. Required for the insertion and/or proper folding and/or complex formation of integral membrane proteins into the membrane. Involved in integration of membrane proteins that insert both dependently and independently of the Sec translocase complex, as well as at least some lipoproteins. In Halalkalibacterium halodurans (strain ATCC BAA-125 / DSM 18197 / FERM 7344 / JCM 9153 / C-125) (Bacillus halodurans), this protein is Membrane protein insertase YidC 1.